A 393-amino-acid chain; its full sequence is Nucleosome assembly protein 1-like 1-B (393 aa).

Residues 1–10 (MANIDNKEQT) show a composition bias toward basic and acidic residues. A disordered region spans residues 1 to 38 (MANIDNKEQTELDQQDMEDVEDVEEEETGEEANSKARQ). Residues 11–30 (ELDQQDMEDVEDVEEEETGE) are compositionally biased toward acidic residues. The NAP1L motif motif lies at 126–151 (YEPTEEECEWKVDEEEDIAEDLKEKA). A Nuclear localization signal motif is present at residues 274–280 (IKKKQKH). Residues 347-377 (AIEDDDDDYDEEGEEADDEEGEEEADEDHDP) are compositionally biased toward acidic residues. Residues 347-393 (AIEDDDDDYDEEGEEADDEEGEEEADEDHDPDFDPKKAQNPAECKQQ) form a disordered region.

The protein belongs to the nucleosome assembly protein (NAP) family. As to quaternary structure, forms homomultimers. Interacts with histone b4. Interacts with the B-type cyclins ccnb1 and ccnb2. In terms of processing, phosphorylated by cyclin B-cdc2 kinase complexes.

It is found in the cytoplasm. Its subcellular location is the nucleus. Acts as a chaperone for the linker histone to facilitate deposition of histone B4 onto linker DNA. Required for both remodeling of sperm chromatin into nucleosomes, and linker histone binding to nucleosome core dimers. Plays a role in tissue-specific gene regulation. Required for primitive hemopoiesis, acting upstream of tal1/scl. The chain is Nucleosome assembly protein 1-like 1-B (nap1l1-b) from Xenopus laevis (African clawed frog).